We begin with the raw amino-acid sequence, 2291 residues long: Protein Ycf2 A (2291 aa).

1642 to 1649 (GSIGTGRS) serves as a coordination point for ATP.

This sequence belongs to the Ycf2 family.

It localises to the plastid. Its subcellular location is the chloroplast stroma. Probable ATPase of unknown function. Its presence in a non-photosynthetic plant (Epifagus virginiana) and experiments in tobacco indicate that it has an essential function which is probably not related to photosynthesis. The chain is Protein Ycf2 A (ycf2-A) from Atropa belladonna (Belladonna).